We begin with the raw amino-acid sequence, 264 residues long: tRNA (guanine-N(1)-)-methyltransferase (264 aa).

Residues Gly-116 and 136-141 each bind S-adenosyl-L-methionine; that span reads VGDFVL.

The protein belongs to the RNA methyltransferase TrmD family. As to quaternary structure, homodimer.

The protein localises to the cytoplasm. It carries out the reaction guanosine(37) in tRNA + S-adenosyl-L-methionine = N(1)-methylguanosine(37) in tRNA + S-adenosyl-L-homocysteine + H(+). Its function is as follows. Specifically methylates guanosine-37 in various tRNAs. This is tRNA (guanine-N(1)-)-methyltransferase from Koribacter versatilis (strain Ellin345).